Consider the following 291-residue polypeptide: Urease accessory protein UreD (291 aa).

Belongs to the UreD family. In terms of assembly, ureD, UreF and UreG form a complex that acts as a GTP-hydrolysis-dependent molecular chaperone, activating the urease apoprotein by helping to assemble the nickel containing metallocenter of UreC. The UreE protein probably delivers the nickel.

It localises to the cytoplasm. Functionally, required for maturation of urease via the functional incorporation of the urease nickel metallocenter. This is Urease accessory protein UreD from Polynucleobacter asymbioticus (strain DSM 18221 / CIP 109841 / QLW-P1DMWA-1) (Polynucleobacter necessarius subsp. asymbioticus).